The chain runs to 698 residues: Polyribonucleotide nucleotidyltransferase (698 aa).

Mg(2+)-binding residues include aspartate 490 and aspartate 496. One can recognise a KH domain in the interval 557–616; sequence PKVVTMTIKPDKIRDVIGPGGKKINEIIDETGVKLDIEQDGTIFIGAVDQAMINRAREII. An S1 motif domain is found at 626–694; that stretch reads GQTYQATVKR…KQGRVNASHR (69 aa).

Belongs to the polyribonucleotide nucleotidyltransferase family. Requires Mg(2+) as cofactor.

It is found in the cytoplasm. The catalysed reaction is RNA(n+1) + phosphate = RNA(n) + a ribonucleoside 5'-diphosphate. Its function is as follows. Involved in mRNA degradation. Catalyzes the phosphorolysis of single-stranded polyribonucleotides processively in the 3'- to 5'-direction. The chain is Polyribonucleotide nucleotidyltransferase from Staphylococcus aureus (strain MSSA476).